A 404-amino-acid chain; its full sequence is High affinity immunoglobulin gamma Fc receptor I (404 aa).

The first 24 residues, 1–24, serve as a signal peptide directing secretion; the sequence is MILTSFGDDMWLLTTLLLWVPVGG. Residues 25 to 297 are Extracellular-facing; it reads EVVNATKAVI…QVLGPQSSAP (273 aa). 5 N-linked (GlcNAc...) asparagine glycosylation sites follow: Asn28, Asn48, Asn69, Asn168, and Asn249. 3 consecutive Ig-like C2-type domains span residues 32–111, 117–194, and 201–286; these read AVIT…LQIH, LQAS…SITV, and PVLR…PELE. 3 disulfides stabilise this stretch: Cys53–Cys95, Cys134–Cys177, and Cys221–Cys269. Residues 298–320 traverse the membrane as a helical segment; the sequence is VWFHILFYLSVGIMFSLNTVLYV. Residues 321 to 342 form an interaction with EPB41L2 region; it reads KIHRLQREKKYNLEVPLVSEQG. Residues 321 to 404 lie on the Cytoplasmic side of the membrane; sequence KIHRLQREKK…DSTGAQTSQS (84 aa). A disordered region spans residues 346–404; it reads NSFQQVRSDGVYEEVTATASQTTPKEAPDGPRSSVGDCGPEQPEPLPPSDSTGAQTSQS. Ser347 bears the Phosphoserine mark. A Phosphothreonine modification is found at Thr368. The span at 394-404 shows a compositional bias: polar residues; that stretch reads SDSTGAQTSQS.

It belongs to the immunoglobulin superfamily. FCGR1 family. Interacts with FCERG1; forms a functional signaling complex. Interacts with FLNA; prevents FCGR1A degradation. Interacts with EPB41L2, LAT and PPL. Interacts with HCK and LYN. N-glycosylated. Post-translationally, phosphorylated on serine residues. As to expression, macrophage-specific.

It localises to the cell membrane. High affinity receptor for the Fc region of immunoglobulins gamma. Functions in both innate and adaptive immune responses. The chain is High affinity immunoglobulin gamma Fc receptor I (Fcgr1) from Mus musculus (Mouse).